The following is a 119-amino-acid chain: Large ribosomal subunit protein uL18 (119 aa).

The protein belongs to the universal ribosomal protein uL18 family. In terms of assembly, part of the 50S ribosomal subunit; part of the 5S rRNA/L5/L18/L25 subcomplex. Contacts the 5S and 23S rRNAs.

Functionally, this is one of the proteins that bind and probably mediate the attachment of the 5S RNA into the large ribosomal subunit, where it forms part of the central protuberance. The protein is Large ribosomal subunit protein uL18 of Ruegeria pomeroyi (strain ATCC 700808 / DSM 15171 / DSS-3) (Silicibacter pomeroyi).